We begin with the raw amino-acid sequence, 349 residues long: Phosphorylcholine phosphatase (349 aa).

Residues 1 to 22 form the signal peptide; the sequence is MTFAKGILAALALAAAVGQASA. Asp53 serves as the catalytic Nucleophile. Asp53 and Asp55 together coordinate Mg(2+). The active-site Proton donor is Asp55. Cys109 and Cys116 form a disulfide bridge. Asp284 contributes to the Mg(2+) binding site.

The protein belongs to the HAD-like hydrolase superfamily. As to quaternary structure, monomer. Homodimer. Homotetramer. It depends on Mg(2+) as a cofactor.

The protein resides in the periplasm. It catalyses the reaction phosphocholine + H2O = choline + phosphate. The catalysed reaction is phosphoethanolamine + H2O = ethanolamine + phosphate. Its activity is regulated as follows. Activity is inhibited by high concentrations of phosphorylcholine, phosphorylethanolamine, choline or betaine. Displays different properties depending on the substrate utilized, the pH conditions as well as the presence or absence of metal ions. At pH 5, activity is inhibited by Al(3+) ions. At pH 7.4, the enzyme cannot catalyze the hydrolysis of pNPP, phosphorylethanolamine is a poor substrate in either the presence or absence of divalent cations, and activity measured with phosphorylcholine is independent of divalent cations or is not inhibited by Al(3+) ions. Mg(2+) produces identical activation at pH 5.0 and 7.4, but Zn(2+) is an activator at pH 5.0 and becomes an inhibitor at pH 7.4. This inhibition at pH 7.4 may be due to a transition from octahedral to tetrahedral coordination geometry, which is produced by hydrolysis of the Zn-hexacoordinated complex. Functionally, catalyzes the hydrolysis of phosphorylcholine (PCho) to produce choline and inorganic phosphate. Can also hydrolyze phosphorylethanolamine and the nonphysiological substrate p-nitrophenylphosphate (pNPP). Shows higher affinity and catalytic efficiency with phosphorylcholine as substrate. In terms of biological role, is probably involved in virulence. The bacteria may break down various host compounds or host cell membranes through the coordinated action of phospholipase C and phosphocholine phosphatase. The final consequence of the action of these enzymes is an increase of the free choline concentration, which may promote the pathogenicity of P.aeruginosa. This Pseudomonas aeruginosa (strain ATCC 15692 / DSM 22644 / CIP 104116 / JCM 14847 / LMG 12228 / 1C / PRS 101 / PAO1) protein is Phosphorylcholine phosphatase.